A 517-amino-acid polypeptide reads, in one-letter code: ATP synthase subunit alpha (517 aa).

Gly-174–Thr-181 contacts ATP.

Belongs to the ATPase alpha/beta chains family. In terms of assembly, F-type ATPases have 2 components, CF(1) - the catalytic core - and CF(0) - the membrane proton channel. CF(1) has five subunits: alpha(3), beta(3), gamma(1), delta(1), epsilon(1). CF(0) has three main subunits: a(1), b(2) and c(9-12). The alpha and beta chains form an alternating ring which encloses part of the gamma chain. CF(1) is attached to CF(0) by a central stalk formed by the gamma and epsilon chains, while a peripheral stalk is formed by the delta and b chains.

The protein localises to the cell inner membrane. It catalyses the reaction ATP + H2O + 4 H(+)(in) = ADP + phosphate + 5 H(+)(out). Produces ATP from ADP in the presence of a proton gradient across the membrane. The alpha chain is a regulatory subunit. In Variovorax paradoxus (strain S110), this protein is ATP synthase subunit alpha.